A 269-amino-acid polypeptide reads, in one-letter code: Malonyl-[acyl-carrier protein] O-methyltransferase (269 aa).

Belongs to the methyltransferase superfamily.

It catalyses the reaction malonyl-[ACP] + S-adenosyl-L-methionine = malonyl-[ACP] methyl ester + S-adenosyl-L-homocysteine. Its pathway is cofactor biosynthesis; biotin biosynthesis. Converts the free carboxyl group of a malonyl-thioester to its methyl ester by transfer of a methyl group from S-adenosyl-L-methionine (SAM). It allows to synthesize pimeloyl-ACP via the fatty acid synthetic pathway. The protein is Malonyl-[acyl-carrier protein] O-methyltransferase of Bacillus anthracis.